The primary structure comprises 58 residues: Large ribosomal subunit protein bL32 (58 aa).

It belongs to the bacterial ribosomal protein bL32 family.

This is Large ribosomal subunit protein bL32 from Anaplasma marginale (strain Florida).